The chain runs to 203 residues: Small ribosomal subunit protein uS4 (203 aa).

Residues 93 to 156 (RRLDNVVYRL…IKVPAILEAV (64 aa)) enclose the S4 RNA-binding domain.

This sequence belongs to the universal ribosomal protein uS4 family. Part of the 30S ribosomal subunit. Contacts protein S5. The interaction surface between S4 and S5 is involved in control of translational fidelity.

In terms of biological role, one of the primary rRNA binding proteins, it binds directly to 16S rRNA where it nucleates assembly of the body of the 30S subunit. With S5 and S12 plays an important role in translational accuracy. This is Small ribosomal subunit protein uS4 from Streptococcus suis (strain 98HAH33).